The primary structure comprises 396 residues: MSTTVTVLTDTWSHRAKRLEGDAKILAIGTATPANWVDQTTYPDFYFRITNSEHLLEHKEKFRRICNKSKIMKRHLVITEELLKKNPNLCTYNEASLNTRQDILVSEVPKLGKDAAMKAIKEWGRPISEITHLVFCTTSGVDMPGADFQLTKLLGLNSSVKRLMMYQQGCNAGAAMLRLAKDLAENNKGGRVLVVCSEVMLSVFRGPSLQQEDNLLAQCLFGDGAAAVIVGTEPRPGLETPLFELVSAAQTTIPDTDSYLKLQLREMGLTFHCSKAVPSLITQNVEDCLVKAFEPFGISDWNSIFWILHPGGNAILDGVEEKLGLEPEKLRASRDVLSQYGNLTSACVLFILDEVRKKSKKDEQMTTGEGLEWGVVFGFGPGLTIDTVVIRSVPIN.

Residue Cys-170 is part of the active site.

This sequence belongs to the thiolase-like superfamily. Chalcone/stilbene synthases family.

The enzyme catalyses (E)-4-coumaroyl-CoA + 3 malonyl-CoA + 3 H(+) = 2',4,4',6'-tetrahydroxychalcone + 3 CO2 + 4 CoA. It functions in the pathway secondary metabolite biosynthesis; flavonoid biosynthesis. In terms of biological role, the primary product of this enzyme is 4,2',4',6'-tetrahydroxychalcone (also termed naringenin-chalcone or chalcone) which can under specific conditions spontaneously isomerize into naringenin. This chain is Chalcone synthase A (CHSA), found in Ipomoea purpurea (Common morning glory).